The primary structure comprises 78 residues: Large ribosomal subunit protein bL28 (78 aa).

The disordered stretch occupies residues M1 to R23.

It belongs to the bacterial ribosomal protein bL28 family.

The protein is Large ribosomal subunit protein bL28 of Picosynechococcus sp. (strain ATCC 27264 / PCC 7002 / PR-6) (Agmenellum quadruplicatum).